The following is a 301-amino-acid chain: Galectin-6 (301 aa).

2 consecutive Galectin domains span residues Tyr-19–Phe-149 and Tyr-173–Ile-301.

In Mus musculus (Mouse), this protein is Galectin-6 (Lgals6).